A 367-amino-acid chain; its full sequence is tRNA/tmRNA (uracil-C(5))-methyltransferase (367 aa).

S-adenosyl-L-methionine is bound by residues Gln190, Tyr218, Asn223, Glu239, and Asp299. The active-site Nucleophile is the Cys324. Glu358 serves as the catalytic Proton acceptor.

It belongs to the class I-like SAM-binding methyltransferase superfamily. RNA M5U methyltransferase family. TrmA subfamily.

It catalyses the reaction uridine(54) in tRNA + S-adenosyl-L-methionine = 5-methyluridine(54) in tRNA + S-adenosyl-L-homocysteine + H(+). The enzyme catalyses uridine(341) in tmRNA + S-adenosyl-L-methionine = 5-methyluridine(341) in tmRNA + S-adenosyl-L-homocysteine + H(+). In terms of biological role, dual-specificity methyltransferase that catalyzes the formation of 5-methyluridine at position 54 (m5U54) in all tRNAs, and that of position 341 (m5U341) in tmRNA (transfer-mRNA). In Pectobacterium atrosepticum (strain SCRI 1043 / ATCC BAA-672) (Erwinia carotovora subsp. atroseptica), this protein is tRNA/tmRNA (uracil-C(5))-methyltransferase.